The chain runs to 116 residues: Large ribosomal subunit protein bL17 (116 aa).

It belongs to the bacterial ribosomal protein bL17 family. As to quaternary structure, part of the 50S ribosomal subunit. Contacts protein L32.

The polypeptide is Large ribosomal subunit protein bL17 (Acaryochloris marina (strain MBIC 11017)).